A 382-amino-acid chain; its full sequence is Anhydro-N-acetylmuramic acid kinase (382 aa).

ATP is bound at residue 9 to 16 (GTSLDGID).

This sequence belongs to the anhydro-N-acetylmuramic acid kinase family.

The enzyme catalyses 1,6-anhydro-N-acetyl-beta-muramate + ATP + H2O = N-acetyl-D-muramate 6-phosphate + ADP + H(+). The protein operates within amino-sugar metabolism; 1,6-anhydro-N-acetylmuramate degradation. Its pathway is cell wall biogenesis; peptidoglycan recycling. Functionally, catalyzes the specific phosphorylation of 1,6-anhydro-N-acetylmuramic acid (anhMurNAc) with the simultaneous cleavage of the 1,6-anhydro ring, generating MurNAc-6-P. Is required for the utilization of anhMurNAc either imported from the medium or derived from its own cell wall murein, and thus plays a role in cell wall recycling. In Bacillus thuringiensis subsp. konkukian (strain 97-27), this protein is Anhydro-N-acetylmuramic acid kinase.